The primary structure comprises 258 residues: Serine protease VLSP-3 (258 aa).

Residues 1 to 18 (MVLIRVLANLLVLQLSYA) form the signal peptide. Residues 19–24 (QKSSEL) constitute a propeptide that is removed on maturation. The Peptidase S1 domain occupies 25–249 (VIGGDECNIN…YTDWIQSIIA (225 aa)). 6 disulfides stabilise this stretch: C31-C163, C50-C66, C98-C256, C142-C210, C174-C189, and C200-C225. N-linked (GlcNAc...) asparagine glycosylation is present at N44. The active-site Charge relay system is the H65. N-linked (GlcNAc...) asparagine glycosylation is found at N79 and N103. D110 functions as the Charge relay system in the catalytic mechanism. N-linked (GlcNAc...) asparagine glycans are attached at residues N154 and N170. S204 (charge relay system) is an active-site residue. N251 carries an N-linked (GlcNAc...) asparagine glycan.

It belongs to the peptidase S1 family. Snake venom subfamily. As to quaternary structure, monomer. Expressed by the venom gland.

It is found in the secreted. Functionally, snake venom serine protease that may act in the hemostasis system of the prey. The polypeptide is Serine protease VLSP-3 (Macrovipera lebetinus (Levantine viper)).